The primary structure comprises 91 residues: Small ribosomal subunit protein bS18 (91 aa).

This sequence belongs to the bacterial ribosomal protein bS18 family. As to quaternary structure, part of the 30S ribosomal subunit. Forms a tight heterodimer with protein bS6.

Functionally, binds as a heterodimer with protein bS6 to the central domain of the 16S rRNA, where it helps stabilize the platform of the 30S subunit. This chain is Small ribosomal subunit protein bS18, found in Burkholderia lata (strain ATCC 17760 / DSM 23089 / LMG 22485 / NCIMB 9086 / R18194 / 383).